Here is a 363-residue protein sequence, read N- to C-terminus: rRNA processing protein rcl1 (363 aa).

Belongs to the RNA 3'-terminal cyclase family. Type 2 subfamily. Interacts directly with bms1 and the U3 snoRNA to form a stable subcomplex. Component of the 90S small subunit processome also known as 90S pre-ribosome that consists of the 35S pre-rRNA, early-associating ribosomal proteins most of which are part of the small ribosomal subunit, the U3 snoRNA and associated proteins.

The protein resides in the nucleus. It is found in the nucleolus. Does not have cyclase activity. Plays a role in 40S-ribosomal-subunit biogenesis in the early pre-rRNA processing steps at sites A0, A1 and A2 that are required for proper maturation of the 18S RNA. Rcl1 activates bms1 by promoting GDP/GTP exchange. The polypeptide is rRNA processing protein rcl1 (rcl1) (Schizosaccharomyces pombe (strain 972 / ATCC 24843) (Fission yeast)).